A 236-amino-acid polypeptide reads, in one-letter code: LexA repressor (236 aa).

The tract at residues 1 to 25 is disordered; that stretch reads MNDSNDTSVAGGAAGADSRVLSADS. A DNA-binding region (H-T-H motif) is located at residues 51 to 71; it reads IREIGDAVGLTSTSSVAHQLR. Catalysis depends on for autocatalytic cleavage activity residues serine 160 and lysine 197.

The protein belongs to the peptidase S24 family. In terms of assembly, homodimer.

It carries out the reaction Hydrolysis of Ala-|-Gly bond in repressor LexA.. In terms of biological role, represses a number of genes involved in the response to DNA damage (SOS response), including recA and lexA. In the presence of single-stranded DNA, RecA interacts with LexA causing an autocatalytic cleavage which disrupts the DNA-binding part of LexA, leading to derepression of the SOS regulon and eventually DNA repair. This is LexA repressor from Mycobacterium tuberculosis (strain ATCC 25177 / H37Ra).